The primary structure comprises 481 residues: Glucokinase-1 (481 aa).

In terms of domain architecture, Hexokinase spans 4–477; that stretch reads PKLTKAVDSI…SGVGAALCAL (474 aa). The hexokinase small subdomain stretch occupies residues 64–204; it reads SGQEHGVTML…LSNVHVVALT (141 aa). Lysine 101 provides a ligand contact to ATP. The glucose-binding stretch occupies residues 146-172; sequence KMGFTFSYPVDQTSLSSGKLIRWTKGF. A hexokinase large subdomain region spans residues 205-466; the sequence is NDTTGTLLAR…RDVHLRISKD (262 aa). Position 466-471 (466-471) interacts with ATP; sequence DGSGVG.

Belongs to the hexokinase family.

The catalysed reaction is D-glucose + ATP = D-glucose 6-phosphate + ADP + H(+). The enzyme catalyses a D-hexose + ATP = a D-hexose 6-phosphate + ADP + H(+). It catalyses the reaction D-mannose + ATP = D-mannose 6-phosphate + ADP + H(+). Its pathway is carbohydrate metabolism; hexose metabolism. It participates in carbohydrate degradation; glycolysis; D-glyceraldehyde 3-phosphate and glycerone phosphate from D-glucose: step 1/4. Its function is as follows. Glukokinase specific for aldohexoses. Phosphorylates glucose and mannose, but not fructose. This Kluyveromyces lactis (strain ATCC 8585 / CBS 2359 / DSM 70799 / NBRC 1267 / NRRL Y-1140 / WM37) (Yeast) protein is Glucokinase-1 (GLK1).